The chain runs to 271 residues: Mannosyl-3-phosphoglycerate phosphatase (271 aa).

Catalysis depends on D13, which acts as the Nucleophile. 3 residues coordinate Mg(2+): D13, D15, and D214.

The protein belongs to the HAD-like hydrolase superfamily. MPGP family. It depends on Mg(2+) as a cofactor.

The protein resides in the cytoplasm. It catalyses the reaction 2-O-(alpha-D-mannosyl)-3-phosphoglycerate + H2O = (2R)-2-O-(alpha-D-mannosyl)-glycerate + phosphate. The sequence is that of Mannosyl-3-phosphoglycerate phosphatase (yedP) from Shigella boydii serotype 4 (strain Sb227).